Reading from the N-terminus, the 469-residue chain is MAEEQDLSEVELSPVGSEEPRCLSPGSAPSLGPDGGGGGGGGSGLRASPGPGELGKVKKEQQDGEADDDKFPVCIREAVSQVLSGYDWTLVPMPVRVNGASKSKPHVKRPMNAFMVWAQAARRKLADQYPHLHNAELSKTLGKLWRLLNESDKRPFIEEAERLRMQHKKDHPDYKYQPRRRKNGKAAQGESECPGGEAEQGGAAAIQAHYKSAHLDHRHPGEGSPMSDGNPEHPSGQSHGPPTPPTTPKTELQSGKADPKRDGRSMGEGGKPHIDFGNVDIGEISHEVMSNMETFDVAELDQYLPPNGHPGHVGSYSAAGYGLGSALAVASGHSAWISKPPGVALPTVSPPGVDAKAQVKTETAGPQGPSHYSDQPSTSQIAYTSLSLPHYGSAFPSISRPQFDYSDHQPSGPYYGHSGQTSGLYSAFSYMGPSQRPLYTAISDPSPSGPQSHSPTHWEQPVYTTLSRP.

5 disordered regions span residues 1–70 (MAEE…DDDK), 163–203 (LRMQ…QGGA), 215–278 (LDHR…DFGN), 357–378 (AQVK…QPST), and 436–469 (RPLY…LSRP). Over residues 23-32 (LSPGSAPSLG) the composition is skewed to low complexity. Position 24 is a phosphoserine (S24). The segment covering 33 to 44 (PDGGGGGGGGSG) has biased composition (gly residues). Residues 65–105 (EADDDKFPVCIREAVSQVLSGYDWTLVPMPVRVNGASKSKP) form a dimerization (DIM) region. A DNA-binding region (HMG box) is located at residues 107–175 (VKRPMNAFMV…QHKKDHPDYK (69 aa)). 2 stretches are compositionally biased toward basic and acidic residues: residues 163-176 (LRMQ…DYKY) and 257-274 (ADPK…KPHI). The tract at residues 231-313 (PEHPSGQSHG…LPPNGHPGHV (83 aa)) is transactivation domain (TAM). The interval 356-469 (KAQVKTETAG…QPVYTTLSRP (114 aa)) is transactivation domain (TAC). The span at 443-469 (SDPSPSGPQSHSPTHWEQPVYTTLSRP) shows a compositional bias: polar residues.

Monomer. Interacts with ARMCX3 at the mitochondrial outer membrane surface. Interacts with PAX3.

The protein localises to the cytoplasm. It is found in the nucleus. Its subcellular location is the mitochondrion outer membrane. In terms of biological role, transcription factor that plays a central role in developing and mature glia. Specifically activates expression of myelin genes, during oligodendrocyte (OL) maturation, such as DUSP15 and MYRF, thereby playing a central role in oligodendrocyte maturation and CNS myelination. Once induced, MYRF cooperates with SOX10 to implement the myelination program. Transcriptional activator of MITF, acting synergistically with PAX3. Transcriptional activator of MBP, via binding to the gene promoter. The protein is Transcription factor SOX-10 (SOX10) of Sus scrofa (Pig).